An 889-amino-acid chain; its full sequence is Cytoplasmic aconitate hydratase (889 aa).

Substrate contacts are provided by residues Gln86 and 205–207 (DSH). The [4Fe-4S] cluster site is built by Cys437, Cys503, and Cys506. Residues Arg536 and Arg541 each coordinate substrate. Thr628 is subject to Phosphothreonine. Residues Arg699 and 779–780 (SR) contribute to the substrate site.

The protein belongs to the aconitase/IPM isomerase family. In terms of assembly, interacts (when associated with the 4Fe-4S) with FBXL5. Interacts with frataxin(81-210). [4Fe-4S] cluster is required as a cofactor.

It localises to the cytoplasm. Its subcellular location is the cytosol. It catalyses the reaction citrate = D-threo-isocitrate. Its function is as follows. Bifunctional iron sensor that switches between 2 activities depending on iron availability. Iron deprivation, promotes its mRNA binding activity through which it regulates the expression of genes involved in iron uptake, sequestration and utilization. Binds to iron-responsive elements (IRES) in the untranslated region of target mRNAs preventing for instance the translation of ferritin and aminolevulinic acid synthase and stabilizing the transferrin receptor mRNA. In terms of biological role, conversely, when cellular iron levels are high, binds a 4Fe-4S cluster which precludes RNA binding activity and promotes the aconitase activity, the isomerization of citrate to isocitrate via cis-aconitate. This chain is Cytoplasmic aconitate hydratase (ACO1), found in Homo sapiens (Human).